We begin with the raw amino-acid sequence, 175 residues long: Electron transport protein HydN (175 aa).

4Fe-4S ferredoxin-type domains follow at residues 2-32 (NRFIIADASKCIGCRTCEVACVVSHQENQDC), 48-79 (KGVNISTATVCRQCEDAPCANVCPNGAISRDK), 80-109 (GFVHVMQERCIGCKTCVVACPYGAMEVVVR), and 124-157 (DKAEANKCDLCNHREDGPACMAACPTHALICVDR). [4Fe-4S] cluster is bound by residues Cys12, Cys15, Cys18, Cys22, Cys58, Cys61, Cys66, Cys70, Cys89, Cys92, Cys95, Cys99, Cys131, Cys134, Cys143, and Cys147.

It depends on [4Fe-4S] cluster as a cofactor.

In terms of biological role, electron transport from formate to hydrogen. This is Electron transport protein HydN (hydN) from Escherichia coli O157:H7.